We begin with the raw amino-acid sequence, 288 residues long: Cytochrome b-c1 complex catalytic subunit, mitochondrial (288 aa).

A helical membrane pass occupies residues 12 to 34; the sequence is SMVQKFIAGGVGVTGLTASYLLY. Positions 69 to 222 constitute a Cytochrome c domain; it reads ASIRRGFQVY…DLVEYEDGTP (154 aa). Heme c is bound by residues Cys82, Cys85, and His86. Over residues 111-121 the composition is skewed to acidic residues; sequence EELEYDDEPDD. The disordered stretch occupies residues 111-138; that stretch reads EELEYDDEPDDEGKPRKRPGKLADYIPG. A helical membrane pass occupies residues 250–268; that stretch reads WGLKALVVLSSLYLLSIWV.

Belongs to the cytochrome c family. In terms of assembly, component of the ubiquinol-cytochrome c oxidoreductase (cytochrome b-c1 complex, complex III, CIII), a multisubunit enzyme composed of 10 subunits. The complex is composed of 3 respiratory subunits cytochrome b (COB), cytochrome c1 (CYT1) and Rieske protein (RIP1), 2 core protein subunits COR1 and QCR2, and 5 low-molecular weight protein subunits QCR6, QCR7, QCR8, QCR9 and QCR10. The complex exists as an obligatory dimer and forms supercomplexes (SCs) in the inner mitochondrial membrane with a monomer or a dimer of cytochrome c oxidase (complex IV, CIV), resulting in 2 different assemblies (supercomplexes III(2)IV and III(2)IV(2)). The cofactor is heme c.

The protein resides in the mitochondrion inner membrane. The enzyme catalyses a quinol + 2 Fe(III)-[cytochrome c](out) = a quinone + 2 Fe(II)-[cytochrome c](out) + 2 H(+)(out). Functionally, component of the ubiquinol-cytochrome c oxidoreductase, a multisubunit transmembrane complex that is part of the mitochondrial electron transport chain which drives oxidative phosphorylation. The complex plays an important role in the uptake of multiple carbon sources present in different host niches. In Candida albicans (strain SC5314 / ATCC MYA-2876) (Yeast), this protein is Cytochrome b-c1 complex catalytic subunit, mitochondrial.